An 849-amino-acid polypeptide reads, in one-letter code: Leucine--tRNA ligase (849 aa).

The 'HIGH' region motif lies at 44 to 54 (PYPSGRIHMGH). Residues 620–624 (KMSKS) carry the 'KMSKS' region motif. Lys623 serves as a coordination point for ATP.

The protein belongs to the class-I aminoacyl-tRNA synthetase family.

Its subcellular location is the cytoplasm. It carries out the reaction tRNA(Leu) + L-leucine + ATP = L-leucyl-tRNA(Leu) + AMP + diphosphate. This chain is Leucine--tRNA ligase, found in Sphingopyxis alaskensis (strain DSM 13593 / LMG 18877 / RB2256) (Sphingomonas alaskensis).